Here is a 141-residue protein sequence, read N- to C-terminus: Pyrophosphate-energized proton pump (141 aa).

3 helical membrane-spanning segments follow: residues 11–31 (GLIA…TLTV), 46–66 (GTNL…IVVI), and 121–141 (LAGL…AGMI).

Belongs to the H(+)-translocating pyrophosphatase (TC 3.A.10) family. In terms of assembly, homodimer. Requires Mg(2+) as cofactor.

The protein resides in the cell inner membrane. The enzyme catalyses diphosphate + H2O + H(+)(in) = 2 phosphate + 2 H(+)(out). Proton pump that utilizes the energy of pyrophosphate hydrolysis as the driving force for proton movement across the membrane. Generates a proton motive force. This Anaplasma marginale protein is Pyrophosphate-energized proton pump (hppA).